The primary structure comprises 484 residues: 3-isopropylmalate dehydratase large subunit (484 aa).

3 residues coordinate [4Fe-4S] cluster: Cys352, Cys412, and Cys415. The segment at 463-484 (TLSSPSDLDPAPASAAIRTDAA) is disordered. Residues 464-478 (LSSPSDLDPAPASAA) are compositionally biased toward low complexity.

This sequence belongs to the aconitase/IPM isomerase family. LeuC type 1 subfamily. In terms of assembly, heterodimer of LeuC and LeuD. It depends on [4Fe-4S] cluster as a cofactor.

It carries out the reaction (2R,3S)-3-isopropylmalate = (2S)-2-isopropylmalate. Its pathway is amino-acid biosynthesis; L-leucine biosynthesis; L-leucine from 3-methyl-2-oxobutanoate: step 2/4. Functionally, catalyzes the isomerization between 2-isopropylmalate and 3-isopropylmalate, via the formation of 2-isopropylmaleate. The polypeptide is 3-isopropylmalate dehydratase large subunit (Pseudarthrobacter chlorophenolicus (strain ATCC 700700 / DSM 12829 / CIP 107037 / JCM 12360 / KCTC 9906 / NCIMB 13794 / A6) (Arthrobacter chlorophenolicus)).